Reading from the N-terminus, the 560-residue chain is Zorya protein ZorC (560 aa).

In terms of biological role, component of antiviral defense system Zorya type I, composed of ZorA, ZorB, ZorC and ZorD. Expression of Zorya type I in E.coli (strain MG1655) confers 10,000-fold resistance to phage SECphi27, 100-fold resistance to lambda, and 10-fold resistance to T7. While most T7 infected Zorya-containing cells undergo abortive infection, a minority produce viable phage progeny. These eventually accumulate to a high multiplicity of infection, leading to culture collapse by 2 hours after initial infection. ZorA and ZorB probably assemble in the cell inner membrane and exert their effect there. The polypeptide is Zorya protein ZorC (Escherichia coli O139:H28 (strain E24377A / ETEC)).